We begin with the raw amino-acid sequence, 167 residues long: 3-isopropylmalate dehydratase small subunit (167 aa).

This sequence belongs to the LeuD family. LeuD type 2 subfamily. As to quaternary structure, heterodimer of LeuC and LeuD.

It catalyses the reaction (2R,3S)-3-isopropylmalate = (2S)-2-isopropylmalate. It functions in the pathway amino-acid biosynthesis; L-leucine biosynthesis; L-leucine from 3-methyl-2-oxobutanoate: step 2/4. In terms of biological role, catalyzes the isomerization between 2-isopropylmalate and 3-isopropylmalate, via the formation of 2-isopropylmaleate. This chain is 3-isopropylmalate dehydratase small subunit, found in Wolinella succinogenes (strain ATCC 29543 / DSM 1740 / CCUG 13145 / JCM 31913 / LMG 7466 / NCTC 11488 / FDC 602W) (Vibrio succinogenes).